Reading from the N-terminus, the 513-residue chain is Probable DNA ligase (513 aa).

Glu-213 is a binding site for ATP. Lys-215 serves as the catalytic N6-AMP-lysine intermediate. Arg-220, Arg-235, Glu-264, Phe-304, Arg-376, and Lys-382 together coordinate ATP.

Belongs to the ATP-dependent DNA ligase family. It depends on Mg(2+) as a cofactor.

It catalyses the reaction ATP + (deoxyribonucleotide)n-3'-hydroxyl + 5'-phospho-(deoxyribonucleotide)m = (deoxyribonucleotide)n+m + AMP + diphosphate.. In terms of biological role, DNA ligase that seals nicks in double-stranded DNA during DNA replication, DNA recombination and DNA repair. The protein is Probable DNA ligase of Anaeromyxobacter dehalogenans (strain 2CP-1 / ATCC BAA-258).